The primary structure comprises 30 residues: Conotoxin CcTx (30 aa).

P2 bears the 4-hydroxyproline mark. O-linked (HexNAc...) serine glycosylation is present at S7. Intrachain disulfides connect C12–C21, C13–C26, and C24–C30. 2 positions are modified to 4-hydroxyproline: P17 and P22.

O-glycosylated at Ser-7 by a core type 9 glycan, containing both D- and L-galactose units (alpha-L-Galp-(1-&gt;4)-alpha-D- GlcpNAc-(1-&gt;6)-[alpha-L-Galp-(1-&gt;2)-bets-D-Galp-(1-&gt;3)-]alpha-D-GalpNAc-(1-&gt;O)). As to expression, expressed by the venom duct.

The protein localises to the secreted. Functionally, may specifically activate neuronal voltage-gated sodium channels (Nav) at the resting membrane potential. Causes a marked contraction and extension of the caudal and dorsal fins in fish and noticeable spontaneous contractions of isolated frog neuromuscular preparations. The sequence is that of Conotoxin CcTx from Conus consors (Singed cone).